The sequence spans 77 residues: Homeodomain-only protein (77 aa).

A DNA-binding region (homeobox; degenerate) is located at residues 7–65 (AALGVRLTEDQVKVLEENFTKVSKHPDETTLMLIAAECGLSEEQTAVWFRMRNAQWRKA).

It localises to the nucleus. It is found in the cytoplasm. Atypical homeodomain protein which does not bind DNA and is required to modulate cardiac growth and development. May act via an interaction with SRF, leading to modulate the expression of SRF-dependent cardiac-specific genes and cardiac development. May act as a co-chaperone for HSPA1A and HSPA1B chaperone proteins and assist in chaperone-mediated protein refolding. The sequence is that of Homeodomain-only protein (hopx) from Danio rerio (Zebrafish).